A 528-amino-acid chain; its full sequence is MRTGQQYLESLRDGRQVYVGGELIDDVTTHPKTSGYAKAIAEYYDLHLDPEHQDVLTFVDDDGVRKSMHWFLPRSKADAARRRAYHEFWFRHFQGGIFTRPPAGMHVVMYAQIDDPEPWGDNAVVAGGRTISFADNIRSQWQRVTTDDVALSPMFVDVQFDRGRDDALVETPMLSIVEQNDQGIVVRGWKAMGTSLPFVNELLVGNLWRPGQTSDQTVYAIVPVNTPGLSLVCRQSNATPDADPYDHPLSTIGDELDGMAYFDDVFIPWENVQHIGNPDHAKWYPQRQFDWVHIETQIRHAVHAELIVGLALLLTNALGTNNNPIVQSQLADLVRFRETCKAFAIAAEETGFTTAGGLFKPNNIYVDLGRAHYLENIHNAVNQLIEFCGRGVVMSPTKADFDHPFLGPKLEEALRGTSISARDRVSIFRQISERYLTQWGARHEMFEKFNGTPLYLVRLLTMQRTEYQVDGPLTDLARQVLGFGDTEALAARAAEVEKNSNWASVAYQPEYAREQDVRDGYYKETEKV.

Substrate is bound at residue 100–104 (RPPAG). FAD is bound by residues 153–155 (PMF), 159–162 (QFDR), and T194. A substrate-binding site is contributed by 205–206 (GN). 461–464 (TMQR) is a binding site for FAD.

The protein belongs to the FADH(2)-utilizing monooxygenase family. As to quaternary structure, the 4-NP/4-NCA monooxygenase is composed of an oxygenase component NpcA and a reductase component NpcB. FAD is required as a cofactor.

It catalyses the reaction 4-nitrophenol + NADH + O2 + H(+) = 4-nitrocatechol + NAD(+) + H2O. The catalysed reaction is 4-nitrocatechol + NADPH + O2 = 2-hydroxy-1,4-benzoquinone + nitrite + NADP(+) + H2O. The enzyme catalyses 4-nitrocatechol + NADH + O2 = 2-hydroxy-1,4-benzoquinone + nitrite + NAD(+) + H2O. It functions in the pathway aromatic compound metabolism. Its pathway is xenobiotic degradation. With respect to regulation, inhibited by methimazole. Involved in the degradation of para-nitrophenol (4-NP). Catalyzes both the initial hydroxylation of 4-NP to produce 4-nitrocatechol (4-NCA) and the subsequent oxidative release of the nitro group from 4-NCA to produce 2-hydroxy-1,4-benzoquinone. It can also use 4-nitroresorcinol as substrate with a rate of nitrite release similar to that observed with the two physiological substrates, 4-PN and 4-NCA. In Rhodococcus opacus (Nocardia opaca), this protein is 4-nitrophenol 4-monooxygenase/4-nitrocatechol 2-monooxygenase, oxygenase component (npcA).